A 368-amino-acid polypeptide reads, in one-letter code: Probable acetylxylan esterase A (368 aa).

The N-terminal stretch at 1–19 (MRALSVFFALFCFLALSSA) is a signal peptide. Positions 20 to 28 (SPGQDVVKR) are excised as a propeptide. Residues 32–304 (GSLQQVTNFG…GEQDMEWFGF (273 aa)) form a catalytic region. Serine 149 functions as the Charge relay system in the catalytic mechanism. N-linked (GlcNAc...) asparagine glycosylation occurs at asparagine 191. The tract at residues 305-333 (AGGSSTTTTQPTTTSTTTSSGGSSTGTGV) is ser/Thr-rich linker. The tract at residues 306 to 330 (GGSSTTTTQPTTTSTTTSSGGSSTG) is disordered. Residues 307–330 (GSSTTTTQPTTTSTTTSSGGSSTG) show a composition bias toward low complexity. The region spanning 332–368 (GVAAHWGQCGGNGWTGPTVCASGYTCTVVNAWYSQCL) is the CBM1 domain.

Belongs to the carbohydrate esterase 1 (CE1) family. AxeA subfamily. In terms of assembly, monomer.

The protein localises to the secreted. The catalysed reaction is Deacetylation of xylans and xylo-oligosaccharides.. It participates in glycan degradation; xylan degradation. Acetylxylan esterase involved in the hydrolysis of xylan, a major structural heterogeneous polysaccharide found in plant biomass representing the second most abundant polysaccharide in the biosphere, after cellulose. Degrades acetylated xylans by cleaving acetyl side groups from the hetero-xylan backbone. The chain is Probable acetylxylan esterase A (axeA) from Neosartorya fischeri (strain ATCC 1020 / DSM 3700 / CBS 544.65 / FGSC A1164 / JCM 1740 / NRRL 181 / WB 181) (Aspergillus fischerianus).